The chain runs to 752 residues: Glutamate carboxypeptidase 2 (752 aa).

The Cytoplasmic portion of the chain corresponds to 1–22; that stretch reads MWNALQDRDSAEVLGHRQRWLR. The residue at position 10 (Ser10) is a Phosphoserine. The helical; Signal-anchor for type II membrane protein transmembrane segment at 23 to 44 threads the bilayer; the sequence is VGTLVLALTGTFLIGFLFGWFI. Residues 45-752 are Extracellular-facing; that stretch reads KPSNEATGNV…AAAETLREVA (708 aa). Asn78, Asn123, and Asn155 each carry an N-linked (GlcNAc...) asparagine glycan. Substrate-binding residues include Arg212 and Asn259. Ca(2+)-binding residues include Thr271 and Tyr274. The interval 276 to 589 is NAALADase; it reads ANEHAYRHEL…QVRGAMVFEL (314 aa). The N-linked (GlcNAc...) asparagine glycan is linked to Asn338. His379 and Asp389 together coordinate Zn(2+). Glu426 serves as a coordination point for substrate. Glu426 functions as the Nucleophile; for NAALADase activity in the catalytic mechanism. Zn(2+) is bound at residue Glu427. The Ca(2+) site is built by Glu435 and Glu438. Asp455 is a binding site for Zn(2+). 2 N-linked (GlcNAc...) asparagine glycosylation sites follow: Asn461 and Asn478. Residues 519–520, Asn521, 536–538, Tyr554, and 554–555 each bind substrate; these read SG, RAR, and YH. His555 is a Zn(2+) binding site. N-linked (GlcNAc...) asparagine glycosylation occurs at Asn615. The active-site Charge relay system is the Ser630. Asn640 carries an N-linked (GlcNAc...) asparagine glycan. Residues Asp668 and His691 each act as charge relay system in the active site. 701-702 provides a ligand contact to substrate; it reads KY. Asn722 carries N-linked (GlcNAc...) asparagine glycosylation.

Belongs to the peptidase M28 family. M28B subfamily. As to quaternary structure, homodimer. It depends on Zn(2+) as a cofactor. As to expression, expressed predominantly in the hippocampal region of the brain and in kidney. Lower levels in the ovary, testis and mandibular gland.

It is found in the cell membrane. The catalysed reaction is Release of an unsubstituted, C-terminal glutamyl residue, typically from Ac-Asp-Glu or folylpoly-gamma-glutamates.. Its activity is regulated as follows. The NAALADase and folate hydrolase activities are inhibited by quisqualic acid. Functionally, has both folate hydrolase and N-acetylated-alpha-linked-acidic dipeptidase (NAALADase) activity. Has a preference for tri-alpha-glutamate peptides. In the intestine, required for the uptake of folate. In the brain, modulates excitatory neurotransmission through the hydrolysis of the neuropeptide, N-aceylaspartylglutamate (NAAG), thereby releasing glutamate. In terms of biological role, also exhibits a dipeptidyl-peptidase IV type activity. In vitro, cleaves Gly-Pro-AMC. The protein is Glutamate carboxypeptidase 2 (Folh1) of Mus musculus (Mouse).